Consider the following 89-residue polypeptide: MSLSTEATAKIVSEFGRDANDTGSTEVQVALLTAQINHLQGHFAEHKKDHHSRRGLLRMVSQRRKLLDYLKRKDVARYTQLIERLGLRR.

It belongs to the universal ribosomal protein uS15 family. Part of the 30S ribosomal subunit. Forms a bridge to the 50S subunit in the 70S ribosome, contacting the 23S rRNA.

In terms of biological role, one of the primary rRNA binding proteins, it binds directly to 16S rRNA where it helps nucleate assembly of the platform of the 30S subunit by binding and bridging several RNA helices of the 16S rRNA. Forms an intersubunit bridge (bridge B4) with the 23S rRNA of the 50S subunit in the ribosome. This is Small ribosomal subunit protein uS15 from Escherichia coli O139:H28 (strain E24377A / ETEC).